Reading from the N-terminus, the 140-residue chain is Large ribosomal subunit protein uL16 (140 aa).

Residues 1–17 (MPLMPKRVKHRKMHRGS) show a composition bias toward basic residues. The tract at residues 1–21 (MPLMPKRVKHRKMHRGSRSGN) is disordered.

It belongs to the universal ribosomal protein uL16 family. In terms of assembly, part of the 50S ribosomal subunit.

Functionally, binds 23S rRNA and is also seen to make contacts with the A and possibly P site tRNAs. This is Large ribosomal subunit protein uL16 from Akkermansia muciniphila (strain ATCC BAA-835 / DSM 22959 / JCM 33894 / BCRC 81048 / CCUG 64013 / CIP 107961 / Muc).